The chain runs to 161 residues: Putative pre-16S rRNA nuclease (161 aa).

Belongs to the YqgF nuclease family.

It is found in the cytoplasm. In terms of biological role, could be a nuclease involved in processing of the 5'-end of pre-16S rRNA. This chain is Putative pre-16S rRNA nuclease, found in Bradyrhizobium sp. (strain BTAi1 / ATCC BAA-1182).